Consider the following 301-residue polypeptide: Protein FdhE homolog (301 aa).

This sequence belongs to the FdhE family.

It localises to the cytoplasm. Functionally, necessary for formate dehydrogenase activity. This is Protein FdhE homolog from Shewanella baltica (strain OS185).